A 137-amino-acid polypeptide reads, in one-letter code: Proofreading thioesterase EntH (137 aa).

Glu63 acts as the Nucleophile or proton acceptor in catalysis.

The protein belongs to the thioesterase PaaI family. Homotetramer. Dimer of dimers. Interacts specifically with the aryl carrier protein (ArCP) domain of EntB.

The protein localises to the cytoplasm. The protein operates within siderophore biosynthesis; enterobactin biosynthesis. Its function is as follows. Required for optimal enterobactin synthesis. Acts as a proofreading enzyme that prevents EntB misacylation by hydrolyzing the thioester bound existing between EntB and wrongly charged molecules. This is Proofreading thioesterase EntH from Cronobacter turicensis (strain DSM 18703 / CCUG 55852 / LMG 23827 / z3032).